Reading from the N-terminus, the 459-residue chain is Exodeoxyribonuclease 7 large subunit (459 aa).

This sequence belongs to the XseA family. In terms of assembly, heterooligomer composed of large and small subunits.

Its subcellular location is the cytoplasm. The enzyme catalyses Exonucleolytic cleavage in either 5'- to 3'- or 3'- to 5'-direction to yield nucleoside 5'-phosphates.. Bidirectionally degrades single-stranded DNA into large acid-insoluble oligonucleotides, which are then degraded further into small acid-soluble oligonucleotides. The polypeptide is Exodeoxyribonuclease 7 large subunit (Pseudomonas syringae pv. tomato (strain ATCC BAA-871 / DC3000)).